The sequence spans 208 residues: Protein GrpE (208 aa).

The segment covering 1 to 12 has biased composition (basic and acidic residues); that stretch reads MTNKDESVKKNT. A disordered region spans residues 1 to 51; it reads MTNKDESVKKNTESTVEETNVKQNIDDSVEQAEESKGHLQDEAIEETSDEN. Polar residues predominate over residues 13-23; it reads ESTVEETNVKQ. Residues 42 to 51 show a composition bias toward acidic residues; the sequence is EAIEETSDEN.

It belongs to the GrpE family. Homodimer.

Its subcellular location is the cytoplasm. In terms of biological role, participates actively in the response to hyperosmotic and heat shock by preventing the aggregation of stress-denatured proteins, in association with DnaK and GrpE. It is the nucleotide exchange factor for DnaK and may function as a thermosensor. Unfolded proteins bind initially to DnaJ; upon interaction with the DnaJ-bound protein, DnaK hydrolyzes its bound ATP, resulting in the formation of a stable complex. GrpE releases ADP from DnaK; ATP binding to DnaK triggers the release of the substrate protein, thus completing the reaction cycle. Several rounds of ATP-dependent interactions between DnaJ, DnaK and GrpE are required for fully efficient folding. In Staphylococcus aureus (strain COL), this protein is Protein GrpE.